Here is a 209-residue protein sequence, read N- to C-terminus: Uracil phosphoribosyltransferase (209 aa).

5-phospho-alpha-D-ribose 1-diphosphate-binding positions include Arg-79, Arg-104, and 131 to 139 (DPMLATGNS). Uracil contacts are provided by residues Ile-194 and 199–201 (GDA). Asp-200 serves as a coordination point for 5-phospho-alpha-D-ribose 1-diphosphate.

It belongs to the UPRTase family. It depends on Mg(2+) as a cofactor.

The enzyme catalyses UMP + diphosphate = 5-phospho-alpha-D-ribose 1-diphosphate + uracil. Its pathway is pyrimidine metabolism; UMP biosynthesis via salvage pathway; UMP from uracil: step 1/1. Allosterically activated by GTP. Functionally, catalyzes the conversion of uracil and 5-phospho-alpha-D-ribose 1-diphosphate (PRPP) to UMP and diphosphate. The polypeptide is Uracil phosphoribosyltransferase (Rhizobium meliloti (strain 1021) (Ensifer meliloti)).